A 531-amino-acid chain; its full sequence is Zinc finger protein 703-B (531 aa).

Polar residues predominate over residues 1 to 10 (MNCSPPGSCT). Disordered regions lie at residues 1–28 (MNCS…ATLA), 88–249 (SQIG…VAPI), and 295–318 (VGNQ…LTGA). Composition is skewed to low complexity over residues 19–28 (TPATPCATLA) and 113–122 (RSSSLKLGES). Over residues 171 to 180 (SPSSRVSSPG) the composition is skewed to polar residues. Residues 183–198 (CESKNNESQEKKEPEV) show a composition bias toward basic and acidic residues. Polar residues predominate over residues 199–215 (NKSSLETSQANPTLTRA). Over residues 216 to 227 (SISNSSAESSQS) the composition is skewed to low complexity. The segment at 404–432 (HICNWVSASGPCDKRFATSEELLAHLRTH) adopts a C2H2-type zinc-finger fold.

The protein belongs to the Elbow/Noc family.

The protein resides in the nucleus. Its subcellular location is the cytoplasm. Transcriptional corepressor which does not bind directly to DNA and may regulate transcription through recruitment of histone deacetylases to gene promoters. Regulates cell adhesion, migration and proliferation. Involved in specification of the lateral neural plate border (NPB). May be required for segmental gene expression during hindbrain development. This is Zinc finger protein 703-B (znf703-b) from Xenopus laevis (African clawed frog).